The primary structure comprises 1229 residues: Vacuolar protein sorting-associated protein 8 homolog (1229 aa).

The tract at residues 67–89 is disordered; that stretch reads EFGMPVPHATPTPSIGEDSTIRT. Residues 901-1063 form a CHCR repeat; that stretch reads ETTRLLSLHY…ILPHQELQSI (163 aa). Residues 1148-1189 form an RING-type; atypical zinc finger; it reads CSMCRQRLYDHSQVLIFGGCGHGIHEQCMEESETQFEECPRC.

Belongs to the VPS8 family. Component of the class C core vacuole/endosome tethering (CORVET) complex composed of at least Vps8, dor/Vps18, car/Vps33A and Vps16A; unlike in other species, Vps11 is not part of the Drosophila complex. Due to the reduced number of components the Drosophila CORVET complex is often referred to as the miniCORVET complex. Has a higher affinity than the homotypic fusion and vacuole protein sorting (HOPS) tethering complex-specific component lt/Vps41 for Vps16A, car/Vps33A and dor/Vps18, the core components shared by both tethering complexes.

Its subcellular location is the early endosome. Functionally, part of the class C core vacuole/endosome tethering (CORVET) complex involved in endo-lysosomal vesicle trafficking and lysosome biogenesis by facilitating docking and fusion of endosomal vesicles. The CORVET complex acts upstream of the homotypic fusion and vacuole protein sorting (HOPS) tethering complex but is not involved in autophagic flux. The CORVET complex may cooperate with the early endosomal tether Rbsn-5 to mediate endosomal fusion. As part of the CORVET complex recruited to endosomes by activated GTP-bound Rab5. Specifically required for endocytic trafficking in a subset of cells, such as hemocytes and nephrocytes, which are highly active in endocytosis. The chain is Vacuolar protein sorting-associated protein 8 homolog from Drosophila melanogaster (Fruit fly).